The chain runs to 210 residues: Large ribosomal subunit protein uL3 (210 aa).

Belongs to the universal ribosomal protein uL3 family. In terms of assembly, part of the 50S ribosomal subunit. Forms a cluster with proteins L14 and L19.

Its function is as follows. One of the primary rRNA binding proteins, it binds directly near the 3'-end of the 23S rRNA, where it nucleates assembly of the 50S subunit. The polypeptide is Large ribosomal subunit protein uL3 (Natranaerobius thermophilus (strain ATCC BAA-1301 / DSM 18059 / JW/NM-WN-LF)).